Consider the following 251-residue polypeptide: Tachykinins (251 aa).

The N-terminal stretch at methionine 1 to alanine 21 is a signal peptide. The propeptide occupies glutamine 22–serine 25. Position 36 is an arginine amide (arginine 36). Residues lysine 39–tyrosine 50 constitute a propeptide that is removed on maturation. Lysine amide is present on lysine 61. Positions serine 65 to aspartate 163 are excised as a propeptide. Arginine 176 carries the arginine amide modification. Positions serine 180–asparagine 183 are excised as a propeptide. Position 199 is an arginine amide (arginine 199). A propeptide spanning residues aspartate 203–proline 223 is cleaved from the precursor. Position 235 is an arginine amide (arginine 235). The propeptide occupies tryptophan 239–asparagine 251.

This sequence belongs to the tachykinin family. In terms of tissue distribution, tachykinin-related peptide 1: Expressed in antennal lobe (AL) and gnathal ganglion (GNG) (at protein level). Expression in AL detected in all animals, in GNG in most animals (at protein level). Not expressed in corpora cardiaca (CC) and corpora allata (CA) (at protein level). Tachykinin-related peptide 2: Expressed in antennal lobe (AL) corpora cardiaca (CC) and corpora allata (CA) with expression detected in few animals (at protein level). Not expressed in gnathal ganglion (GNG) (at protein level). Tachykinin-related peptide 4: Expressed in corpora cardiaca (CC), corpora allata (CA), antennal lobe (AL) and gnathal ganglion (GNG) (at protein level). Expression in AL and GNG detected in most animals, in CC and CA detected in few animals (at protein level). Tachykinin-related peptide 5: Expressed in corpora cardiaca (CC), corpora allata (CA), antennal lobe (AL) and gnathal ganglion (GNG) (at protein level). Expression in CC and CA detected in some animals, in AL and GNG in few animals (at protein level). Tachykinin-related peptide 6: Expressed in antennal lobe (AL) and gnathal ganglion (GNG) (at protein level). Expression in AL detected in all animals, in GNG in some animals (at protein level). Not expressed in corpora cardiaca (CC) and corpora allata (CA) (at protein level).

The protein resides in the secreted. Tachykinins are active peptides which excite neurons, evoke behavioral responses, are potent vasodilators and secretagogues, and contract (directly or indirectly) many smooth muscles. The sequence is that of Tachykinins from Agrotis ipsilon (Black cutworm moth).